The primary structure comprises 266 residues: Hydroxyethylthiazole kinase (266 aa).

M39 serves as a coordination point for substrate. ATP is bound by residues K115 and T160. G187 contributes to the substrate binding site.

Belongs to the Thz kinase family. The cofactor is Mg(2+).

It carries out the reaction 5-(2-hydroxyethyl)-4-methylthiazole + ATP = 4-methyl-5-(2-phosphooxyethyl)-thiazole + ADP + H(+). It functions in the pathway cofactor biosynthesis; thiamine diphosphate biosynthesis; 4-methyl-5-(2-phosphoethyl)-thiazole from 5-(2-hydroxyethyl)-4-methylthiazole: step 1/1. Catalyzes the phosphorylation of the hydroxyl group of 4-methyl-5-beta-hydroxyethylthiazole (THZ). The protein is Hydroxyethylthiazole kinase of Staphylococcus aureus (strain MSSA476).